A 323-amino-acid polypeptide reads, in one-letter code: Protoheme IX farnesyltransferase (323 aa).

Transmembrane regions (helical) follow at residues 28 to 48, 50 to 70, 101 to 121, 122 to 142, 150 to 170, 178 to 198, 235 to 255, and 282 to 302; these read IIPLLLITTAAAMWIASEGRV, LFTLFITLIGGTLAAAAAQVM, FIFAVILAILSFSLFALFVNL, LSGLLAMSGIVFYMLVYTHLL, IVIGGAAGSIPPLVGWAAVTG, ILFAIIFLWTPPHFWALALMI, FLLVYPLGVSGAVYGGIAIIL, and FSIFYLMLLCTAMVIDSLPLT.

Belongs to the UbiA prenyltransferase family. Protoheme IX farnesyltransferase subfamily.

The protein localises to the cell inner membrane. It catalyses the reaction heme b + (2E,6E)-farnesyl diphosphate + H2O = Fe(II)-heme o + diphosphate. Its pathway is porphyrin-containing compound metabolism; heme O biosynthesis; heme O from protoheme: step 1/1. In terms of biological role, converts heme B (protoheme IX) to heme O by substitution of the vinyl group on carbon 2 of heme B porphyrin ring with a hydroxyethyl farnesyl side group. This Rippkaea orientalis (strain PCC 8801 / RF-1) (Cyanothece sp. (strain PCC 8801)) protein is Protoheme IX farnesyltransferase.